A 480-amino-acid polypeptide reads, in one-letter code: Glycerol 3-phosphate dehydrogenase (480 aa).

FAD contacts are provided by residues isoleucine 12, glutamate 31, 40 to 41 (TT), and 45 to 47 (SAI). Positions 45 and 49 each coordinate sn-glycerol 3-phosphate. Histidine 49 serves as the catalytic Proton acceptor. Valine 172 is an FAD binding site. The sn-glycerol 3-phosphate site is built by lysine 249 and arginine 310. 335–336 (IE) lines the FAD pocket. A sn-glycerol 3-phosphate-binding site is contributed by serine 337. Serine 341 contacts FAD. The [2Fe-2S] cluster site is built by cysteine 400, cysteine 402, cysteine 437, and cysteine 442.

Requires [2Fe-2S] cluster as cofactor.

The catalysed reaction is sn-glycerol 3-phosphate + A = dihydroxyacetone phosphate + AH2. It participates in polyol metabolism; glycerol degradation via glycerol kinase pathway; glycerone phosphate from sn-glycerol 3-phosphate (aerobic route): step 1/1. Catalyzes the dehydrogenation of glycerol 3-phosphate to dihydroxyacetone phosphate. Is probably involved in anaerobic glycerol metabolism. Active in vitro with the artificial electron acceptor 2,6-dichlorophenolindophenol (DCPIP), but not with NAD or NADP. Also displays a very low oxidase activity in vitro on glycerol 3-phosphate with O2 as the electron acceptor, but this activity is most likely not physiological. The polypeptide is Glycerol 3-phosphate dehydrogenase (Caloramator mitchellensis).